The following is a 195-amino-acid chain: Protein GrpE (195 aa).

It belongs to the GrpE family. As to quaternary structure, homodimer.

The protein localises to the cytoplasm. Functionally, participates actively in the response to hyperosmotic and heat shock by preventing the aggregation of stress-denatured proteins, in association with DnaK and GrpE. It is the nucleotide exchange factor for DnaK and may function as a thermosensor. Unfolded proteins bind initially to DnaJ; upon interaction with the DnaJ-bound protein, DnaK hydrolyzes its bound ATP, resulting in the formation of a stable complex. GrpE releases ADP from DnaK; ATP binding to DnaK triggers the release of the substrate protein, thus completing the reaction cycle. Several rounds of ATP-dependent interactions between DnaJ, DnaK and GrpE are required for fully efficient folding. The sequence is that of Protein GrpE from Francisella tularensis subsp. novicida (strain U112).